We begin with the raw amino-acid sequence, 146 residues long: Flagellar assembly factor FliW 1 (146 aa).

This sequence belongs to the FliW family. Interacts with translational regulator CsrA and flagellin(s).

Its subcellular location is the cytoplasm. Acts as an anti-CsrA protein, binds CsrA and prevents it from repressing translation of its target genes, one of which is flagellin. Binds to flagellin and participates in the assembly of the flagellum. The polypeptide is Flagellar assembly factor FliW 1 (Helicobacter hepaticus (strain ATCC 51449 / 3B1)).